The chain runs to 690 residues: Methionine--tRNA ligase (690 aa).

A 'HIGH' region motif is present at residues 20–30 (PYANGSIHLGH). The Zn(2+) site is built by C151, C154, C164, and C167. Residues 337-341 (KMSKS) carry the 'KMSKS' region motif. ATP is bound at residue K340. Residues 589–690 (DFAKVDLRIA…EGAQPGMRVM (102 aa)) form the tRNA-binding domain.

The protein belongs to the class-I aminoacyl-tRNA synthetase family. MetG type 1 subfamily. In terms of assembly, homodimer. It depends on Zn(2+) as a cofactor.

The protein resides in the cytoplasm. The catalysed reaction is tRNA(Met) + L-methionine + ATP = L-methionyl-tRNA(Met) + AMP + diphosphate. Its function is as follows. Is required not only for elongation of protein synthesis but also for the initiation of all mRNA translation through initiator tRNA(fMet) aminoacylation. This Vibrio vulnificus (strain YJ016) protein is Methionine--tRNA ligase.